The chain runs to 385 residues: S-adenosylmethionine synthase (385 aa).

ATP is bound at residue His16. Asp18 contributes to the Mg(2+) binding site. Glu44 is a binding site for K(+). L-methionine is bound by residues Glu57 and Gln100. A flexible loop region spans residues 100–110 (QSPDINQGVDR). ATP is bound by residues 164–166 (DGK), 230–231 (KF), Asp239, 245–246 (RK), Ala262, and Lys266. Asp239 contacts L-methionine. L-methionine is bound at residue Lys270.

It belongs to the AdoMet synthase family. In terms of assembly, homotetramer; dimer of dimers. Requires Mg(2+) as cofactor. The cofactor is K(+).

The protein resides in the cytoplasm. The enzyme catalyses L-methionine + ATP + H2O = S-adenosyl-L-methionine + phosphate + diphosphate. Its pathway is amino-acid biosynthesis; S-adenosyl-L-methionine biosynthesis; S-adenosyl-L-methionine from L-methionine: step 1/1. Functionally, catalyzes the formation of S-adenosylmethionine (AdoMet) from methionine and ATP. The overall synthetic reaction is composed of two sequential steps, AdoMet formation and the subsequent tripolyphosphate hydrolysis which occurs prior to release of AdoMet from the enzyme. This chain is S-adenosylmethionine synthase, found in Helicobacter pylori (strain G27).